Consider the following 211-residue polypeptide: MFITFEGIDGCGKTTQAVLLAKYLSDLYGEHRVVLTREPGGTSLNELIRGALLGLTDYKLDGITELMLFIAMRRESFVKVVLPGLLAGKIVISDRFTDSTVAYQGYGCGVDLALVGMLNSLVADVVPDITFVIDASIELALARTSLNGFENHGPEFYDRVREGFRTIVANNPHRCHMIDCKSDAAEDVYSTHDRIVALFRAITQDKLKVAK.

7–14 (GIDGCGKT) lines the ATP pocket.

The protein belongs to the thymidylate kinase family.

It catalyses the reaction dTMP + ATP = dTDP + ADP. Phosphorylation of dTMP to form dTDP in both de novo and salvage pathways of dTTP synthesis. In Anaplasma marginale (strain St. Maries), this protein is Thymidylate kinase.